Here is a 281-residue protein sequence, read N- to C-terminus: NADPH-dependent 7-cyano-7-deazaguanine reductase (281 aa).

A substrate-binding site is contributed by 88-90 (VES). 90–91 (SK) is a binding site for NADPH. Cys189 (thioimide intermediate) is an active-site residue. The active-site Proton donor is the Asp196. 228-229 (HE) contributes to the substrate binding site. An NADPH-binding site is contributed by 257–258 (RG).

This sequence belongs to the GTP cyclohydrolase I family. QueF type 2 subfamily. Homodimer.

The protein resides in the cytoplasm. The enzyme catalyses 7-aminomethyl-7-carbaguanine + 2 NADP(+) = 7-cyano-7-deazaguanine + 2 NADPH + 3 H(+). It participates in tRNA modification; tRNA-queuosine biosynthesis. Its function is as follows. Catalyzes the NADPH-dependent reduction of 7-cyano-7-deazaguanine (preQ0) to 7-aminomethyl-7-deazaguanine (preQ1). This Klebsiella pneumoniae subsp. pneumoniae (strain ATCC 700721 / MGH 78578) protein is NADPH-dependent 7-cyano-7-deazaguanine reductase.